We begin with the raw amino-acid sequence, 1366 residues long: Protein HUA2-LIKE 2 (1366 aa).

The region spanning 24-81 is the PWWP domain; that stretch reads VGDLVLAKVKGFPAWPAVVSEPEKWDASPDSKKVFVHFFGTQQIAFCNPGDVEAFTEE. Basic and acidic residues predominate over residues 111 to 124; it reads LKQQERASDPKSAE. 5 disordered regions span residues 111 to 138, 203 to 319, 384 to 403, 427 to 451, and 787 to 808; these read LKQQ…TLMP, TYSS…SGSK, NVQT…CEEN, EANS…AQTS, and SESA…TGEK. A compositionally biased stretch (polar residues) spans 213-252; sequence VRSQNCAPQNETCPVQRSKSPSRLQTEKLQSSMLQNSDGG. The segment covering 391–403 has biased composition (basic and acidic residues); the sequence is SHEKFTERPCEEN. Residues 787–803 are compositionally biased toward polar residues; it reads SESANDMQNNSSGSPNI. The region spanning 836–977 is the CID domain; it reads DVQSTRESYE…HHIRELDSHS (142 aa). Disordered regions lie at residues 1027-1076 and 1128-1366; these read LKDE…TAER and TSHQ…QRSD. The segment covering 1032–1052 has biased composition (acidic residues); that stretch reads GGSDSEGGCDSEGGSDSDGGD. Residues 1057 to 1066 show a composition bias toward basic and acidic residues; that stretch reads TPEHESRILE. Pro residues predominate over residues 1138 to 1152; the sequence is PPLPSSSPPPPPAPP. Polar residues predominate over residues 1191 to 1223; sequence LSGSTMHYQGPESSYISGVQLTNSIPQADGSNF. Residues 1229–1244 show a composition bias toward pro residues; sequence PSHPHPHPPPPPPPPQ. 2 stretches are compositionally biased toward basic and acidic residues: residues 1251–1262 and 1275–1298; these read EPGHVLKSHRDA and CDER…RDNW. Low complexity predominate over residues 1299–1309; sequence RYPPSSSYGSR.

Expressed throughout young primordia, and vegetative and reproductive apices.

It is found in the nucleus. Probable transcription factor that acts with partial redundancy with HULK1 and HULK3. Plays diverse and essential roles in the control of plant development, physiology and flowering time. This chain is Protein HUA2-LIKE 2, found in Arabidopsis thaliana (Mouse-ear cress).